A 503-amino-acid chain; its full sequence is Glycerol kinase (503 aa).

T14 contributes to the ADP binding site. 3 residues coordinate ATP: T14, T15, and S16. T14 serves as a coordination point for sn-glycerol 3-phosphate. ADP is bound at residue R18. 4 residues coordinate sn-glycerol 3-phosphate: R84, E85, Y136, and D246. Glycerol is bound by residues R84, E85, Y136, D246, and Q247. 2 residues coordinate ADP: T268 and G311. Positions 268, 311, 315, and 412 each coordinate ATP. Positions 412 and 416 each coordinate ADP.

This sequence belongs to the FGGY kinase family.

The catalysed reaction is glycerol + ATP = sn-glycerol 3-phosphate + ADP + H(+). Its pathway is polyol metabolism; glycerol degradation via glycerol kinase pathway; sn-glycerol 3-phosphate from glycerol: step 1/1. Its activity is regulated as follows. Inhibited by fructose 1,6-bisphosphate (FBP). Functionally, key enzyme in the regulation of glycerol uptake and metabolism. Catalyzes the phosphorylation of glycerol to yield sn-glycerol 3-phosphate. The polypeptide is Glycerol kinase (Haemophilus influenzae (strain PittEE)).